Reading from the N-terminus, the 1203-residue chain is DNA-directed RNA polymerase subunit beta' (1203 aa).

Cysteine 60, cysteine 62, cysteine 75, and cysteine 78 together coordinate Zn(2+). 3 residues coordinate Mg(2+): aspartate 449, aspartate 451, and aspartate 453. Zn(2+)-binding residues include cysteine 818, cysteine 892, cysteine 899, and cysteine 902. The segment at 1180–1203 (RNLESGLDMPESAEESSEEETQTV) is disordered. Residues 1190–1203 (ESAEESSEEETQTV) are compositionally biased toward acidic residues.

Belongs to the RNA polymerase beta' chain family. The RNAP catalytic core consists of 2 alpha, 1 beta, 1 beta' and 1 omega subunit. When a sigma factor is associated with the core the holoenzyme is formed, which can initiate transcription. It depends on Mg(2+) as a cofactor. Zn(2+) serves as cofactor.

It carries out the reaction RNA(n) + a ribonucleoside 5'-triphosphate = RNA(n+1) + diphosphate. In terms of biological role, DNA-dependent RNA polymerase catalyzes the transcription of DNA into RNA using the four ribonucleoside triphosphates as substrates. This Oceanobacillus iheyensis (strain DSM 14371 / CIP 107618 / JCM 11309 / KCTC 3954 / HTE831) protein is DNA-directed RNA polymerase subunit beta'.